Reading from the N-terminus, the 326-residue chain is Tetraacyldisaccharide 4'-kinase (326 aa).

ATP is bound at residue 58–65 (SVGGNGKT).

Belongs to the LpxK family.

The enzyme catalyses a lipid A disaccharide + ATP = a lipid IVA + ADP + H(+). It functions in the pathway glycolipid biosynthesis; lipid IV(A) biosynthesis; lipid IV(A) from (3R)-3-hydroxytetradecanoyl-[acyl-carrier-protein] and UDP-N-acetyl-alpha-D-glucosamine: step 6/6. Transfers the gamma-phosphate of ATP to the 4'-position of a tetraacyldisaccharide 1-phosphate intermediate (termed DS-1-P) to form tetraacyldisaccharide 1,4'-bis-phosphate (lipid IVA). The chain is Tetraacyldisaccharide 4'-kinase from Pseudoalteromonas translucida (strain TAC 125).